The following is a 400-amino-acid chain: MRIEPIIQGVVARSAHPFGCEAAIKKQIAFVKKAPQISQGPKRVLILGASSGFGLAARIALTFGGAQADTIGVSFERGPSEKGTGSAGWYNNVFFKREAEKEGRIAINIVGDAFASETRTQVIEAIETYFEGEVDLVIYSLATGMRPIPNQPGEFWRSVIKPFGQTVTGASLDLEHDRWIDTTLESATEEEALHTIKVMGGEDWESWIDTLINAESIAQGCQTIAFSYVGPEITHPIYLDGTLGRAKIDLHQTSHSLNLKLANFDGAAYATVCKALVTKASVFIPALSPYLLALYRVMKDEKCHEGCIEQMQRLFATKLYGQDHISVDGERLVRMDDWELAPHIQNKVNQILEEMDANNFQVIGDYQGFKNEFLQLNGFGFDEVDYSQDIDLQTILKLTP.

NAD(+) is bound by residues Gly48–Phe53, Phe75–Glu76, Asp112–Ala113, and Leu141–Ala142. Position 228 (Tyr228) interacts with substrate. Tyr238 (proton donor) is an active-site residue. NAD(+) contacts are provided by residues Lys247 and Leu276 to Thr278.

This sequence belongs to the TER reductase family. In terms of assembly, monomer.

It catalyses the reaction a 2,3-saturated acyl-[ACP] + NAD(+) = a (2E)-enoyl-[ACP] + NADH + H(+). The protein operates within lipid metabolism; fatty acid biosynthesis. Functionally, involved in the final reduction of the elongation cycle of fatty acid synthesis (FAS II). Catalyzes the reduction of a carbon-carbon double bond in an enoyl moiety that is covalently linked to an acyl carrier protein (ACP). This chain is Enoyl-[acyl-carrier-protein] reductase [NADH] 2, found in Vibrio vulnificus (strain YJ016).